The primary structure comprises 488 residues: uncharacterized protein (488 aa).

The next 12 membrane-spanning stretches (helical) occupy residues 2–22 (FGLPIPIIGLLIAVFVLVFLV), 27–47 (VHAFIAMLIAASIAGLVGGMS), 59–79 (FGGTLGSIGIVIGLGVMMGSV), 106–126 (LAITGYVVSIPIFVDSAFVIL), 176–196 (IGAMLLTGMCMAFLPVVGIVL), 241–261 (LLPIVLPIVLIFIKAVVHLFV), 275–295 (IVSFLGHPVIVLALSVLISVY), 314–334 (VKTAGIILLVTGAGGALGAVL), 347–367 (IANLPISPILIPFIVSTLVRF), 368–388 (IQGSGTVAMITAASISSPILA), 438–458 (VPTTIAWGIGGISVILANLIF), and 461–481 (DGSVFDLLFPVVVLASILFYI).

It belongs to the GntP permease family.

It is found in the cell inner membrane. This is an uncharacterized protein from Haemophilus influenzae (strain ATCC 51907 / DSM 11121 / KW20 / Rd).